Reading from the N-terminus, the 209-residue chain is Ribonuclease HII (209 aa).

Residues 19–208 (GLVAGVDEAG…VARALQAPVA (190 aa)) form the RNase H type-2 domain. Residues Asp25, Glu26, and Asp117 each coordinate a divalent metal cation.

This sequence belongs to the RNase HII family. Mn(2+) is required as a cofactor. Mg(2+) serves as cofactor.

It localises to the cytoplasm. The enzyme catalyses Endonucleolytic cleavage to 5'-phosphomonoester.. Its function is as follows. Endonuclease that specifically degrades the RNA of RNA-DNA hybrids. This is Ribonuclease HII from Acidovorax ebreus (strain TPSY) (Diaphorobacter sp. (strain TPSY)).